A 358-amino-acid chain; its full sequence is Small ribosomal subunit biogenesis GTPase RsgA 2 (358 aa).

Residues 106 to 261 form the CP-type G domain; sequence AEQLIAANVD…LIDTPGMREI (156 aa). Residues 151–154 and 203–211 contribute to the GTP site; these read SKAD and GSSGVGKST. 4 residues coordinate Zn(2+): Cys284, Cys289, His291, and Cys297.

Belongs to the TRAFAC class YlqF/YawG GTPase family. RsgA subfamily. As to quaternary structure, monomer. Associates with 30S ribosomal subunit, binds 16S rRNA. Zn(2+) is required as a cofactor.

The protein resides in the cytoplasm. Its function is as follows. One of several proteins that assist in the late maturation steps of the functional core of the 30S ribosomal subunit. Helps release RbfA from mature subunits. May play a role in the assembly of ribosomal proteins into the subunit. Circularly permuted GTPase that catalyzes slow GTP hydrolysis, GTPase activity is stimulated by the 30S ribosomal subunit. The protein is Small ribosomal subunit biogenesis GTPase RsgA 2 of Vibrio parahaemolyticus serotype O3:K6 (strain RIMD 2210633).